Consider the following 433-residue polypeptide: Acetyl-CoA acetyltransferase erg10A, mitochondrial (433 aa).

Residues M1–L34 constitute a mitochondrion transit peptide. Catalysis depends on C124, which acts as the Acyl-thioester intermediate. Y219 serves as a coordination point for K(+). CoA is bound by residues N229 and K262. A280 is a binding site for K(+). A CoA-binding site is contributed by S284. Residues H387 and C415 each act as proton acceptor in the active site. Position 416 (N416) interacts with chloride.

The protein belongs to the thiolase-like superfamily. Thiolase family. Homotetramer. It depends on K(+) as a cofactor.

The protein resides in the mitochondrion. It carries out the reaction 2 acetyl-CoA = acetoacetyl-CoA + CoA. It functions in the pathway metabolic intermediate biosynthesis; (R)-mevalonate biosynthesis; (R)-mevalonate from acetyl-CoA: step 1/3. Mitochondrial acetyl-CoA acetyltransferase that catalyzes both the formation and degradation of acetoacetyl-CoA. Has no overlapping function with erg10B and seems not to be involved in ergosterol biosynthesis. Plays an important role in growth, morphogenesis and maintaining mitochondrial function including the response to oxidative stresses. This Aspergillus fumigatus (strain ATCC MYA-4609 / CBS 101355 / FGSC A1100 / Af293) (Neosartorya fumigata) protein is Acetyl-CoA acetyltransferase erg10A, mitochondrial.